The following is a 268-amino-acid chain: 4-diphosphocytidyl-2-C-methyl-D-erythritol kinase (268 aa).

Residue Lys9 is part of the active site. 88–98 (PPGAGLGGGSS) provides a ligand contact to ATP. Asp130 is an active-site residue.

Belongs to the GHMP kinase family. IspE subfamily.

The enzyme catalyses 4-CDP-2-C-methyl-D-erythritol + ATP = 4-CDP-2-C-methyl-D-erythritol 2-phosphate + ADP + H(+). It functions in the pathway isoprenoid biosynthesis; isopentenyl diphosphate biosynthesis via DXP pathway; isopentenyl diphosphate from 1-deoxy-D-xylulose 5-phosphate: step 3/6. Its function is as follows. Catalyzes the phosphorylation of the position 2 hydroxy group of 4-diphosphocytidyl-2C-methyl-D-erythritol. The protein is 4-diphosphocytidyl-2-C-methyl-D-erythritol kinase of Aquifex aeolicus (strain VF5).